The primary structure comprises 405 residues: Lariat debranching enzyme (405 aa).

Positions 11, 13, 40, and 85 each coordinate a divalent metal cation. Positions 125-159 (SGIWKEWDFNKQRPDWNDLENNNWKANIRNLYHVR) are lariat recognition loop. Residues H179, H231, and H233 each coordinate a divalent metal cation. Residues 242–277 (HNKRSHEPPNKSTSKTKKNNNEIDLDLSSDEDERSG) form a disordered region. Residues 264–274 (IDLDLSSDEDE) show a composition bias toward acidic residues. Residue S269 is modified to Phosphoserine.

The protein belongs to the lariat debranching enzyme family. Requires Fe(2+) as cofactor. Zn(2+) serves as cofactor. The cofactor is Mn(2+).

The protein resides in the nucleus. It localises to the cytoplasm. Active in presence of diverse metals including Fe(2+), Zn(2+) and Mn(2+). Binds two metal cations in two adjacent alpha and beta metal-binding pockets. The activity is the highest with Fe(2+) bound to the 2 metal-binding sites. Activity is low with Zn(2+) and Mn(2+). Its function is as follows. Cleaves the 2'-5' phosphodiester linkage at the branch point of lariat intron pre-mRNAs after splicing and converts them into linear molecules that are subsequently degraded, thereby facilitating ribonucleotide turnover. It also participates in Ty1 retrovirus-like transposition via an RNA lariat intermediate in cDNA synthesis. This is Lariat debranching enzyme (DBR1) from Saccharomyces cerevisiae (strain ATCC 204508 / S288c) (Baker's yeast).